Consider the following 213-residue polypeptide: tRNA (guanine-N(7)-)-methyltransferase (213 aa).

S-adenosyl-L-methionine-binding residues include Glu44, Glu69, Asn96, and Asp118. Residue Asp118 is part of the active site. Substrate is bound at residue Lys122. The interaction with RNA stretch occupies residues 124-129 (RHEKRR). Residues Asp154 and 191 to 194 (TEYE) each bind substrate.

This sequence belongs to the class I-like SAM-binding methyltransferase superfamily. TrmB family.

The catalysed reaction is guanosine(46) in tRNA + S-adenosyl-L-methionine = N(7)-methylguanosine(46) in tRNA + S-adenosyl-L-homocysteine. It participates in tRNA modification; N(7)-methylguanine-tRNA biosynthesis. Functionally, catalyzes the formation of N(7)-methylguanine at position 46 (m7G46) in tRNA. In Bacillus licheniformis (strain ATCC 14580 / DSM 13 / JCM 2505 / CCUG 7422 / NBRC 12200 / NCIMB 9375 / NCTC 10341 / NRRL NRS-1264 / Gibson 46), this protein is tRNA (guanine-N(7)-)-methyltransferase.